Consider the following 314-residue polypeptide: Homoserine kinase (314 aa).

96–106 (PIGSGLGSSAC) serves as a coordination point for ATP.

It belongs to the GHMP kinase family. Homoserine kinase subfamily.

Its subcellular location is the cytoplasm. It catalyses the reaction L-homoserine + ATP = O-phospho-L-homoserine + ADP + H(+). The protein operates within amino-acid biosynthesis; L-threonine biosynthesis; L-threonine from L-aspartate: step 4/5. In terms of biological role, catalyzes the ATP-dependent phosphorylation of L-homoserine to L-homoserine phosphate. The polypeptide is Homoserine kinase (Haemophilus influenzae (strain 86-028NP)).